The sequence spans 326 residues: MQITVREALRDAMQEEMIRDDKVFVIGEEVAEYQGAYKVTQGLLEQFGPKRVIDTPITEYGFAGLAVGAAFAGLRPIVEFMTFNFAMQAFDHIVNSAAKTHYMSGGQVKCPIVFRGPNGAASRVAAQHSQNYTACYSHIPGLKVVAPYSAEDHKGLMLTAIRDDNPVVFLENEILYGHSFDVPKTIEPIPFGQAKILREGSSVTIVTFSIQVKLALDAANFVQNDNIDCEVIDLRTIKPLDTETIIESVKKTNRLVVVEEGWFFAGVGASIASIVMKEAFDYLDAPIEIVSGKDLPLPYAVNLETLALPSESDVIEAVKKVCYYSI.

Residue Glu59 coordinates thiamine diphosphate.

In terms of assembly, heterodimer of an alpha and a beta chain. Thiamine diphosphate serves as cofactor.

The catalysed reaction is N(6)-[(R)-lipoyl]-L-lysyl-[protein] + pyruvate + H(+) = N(6)-[(R)-S(8)-acetyldihydrolipoyl]-L-lysyl-[protein] + CO2. Its function is as follows. The pyruvate dehydrogenase complex catalyzes the overall conversion of pyruvate to acetyl-CoA and CO(2). It contains multiple copies of three enzymatic components: pyruvate dehydrogenase (E1), dihydrolipoamide acetyltransferase (E2) and lipoamide dehydrogenase (E3). This Rickettsia conorii (strain ATCC VR-613 / Malish 7) protein is Pyruvate dehydrogenase E1 component subunit beta (pdhB).